The following is a 191-amino-acid chain: Protein NUCLEAR FUSION DEFECTIVE 2 (191 aa).

Positions 1-29 are cleaved as a signal peptide; the sequence is MATLRFTLLLLVFVVGIFFSFSSVSHVRA. The 120-residue stretch at 48–167 folds into the RNase III domain; sequence LAKLQTQIGY…IFGAIAIDAG (120 aa).

Required for karyogamy during female gametophyte development, when the two polar nuclei fuse to form the diploid central cell nucleus. This chain is Protein NUCLEAR FUSION DEFECTIVE 2, found in Arabidopsis thaliana (Mouse-ear cress).